The chain runs to 448 residues: Bifunctional protein GlmU (448 aa).

The interval M1 to K232 is pyrophosphorylase. UDP-N-acetyl-alpha-D-glucosamine contacts are provided by residues L11–G14, K25, Q78, and G83–T84. D108 lines the Mg(2+) pocket. Residues G144, E158, N173, and N230 each coordinate UDP-N-acetyl-alpha-D-glucosamine. N230 is a Mg(2+) binding site. Positions A233 to A253 are linker. Positions G254–K448 are N-acetyltransferase. The UDP-N-acetyl-alpha-D-glucosamine site is built by R319 and K337. H349 (proton acceptor) is an active-site residue. The UDP-N-acetyl-alpha-D-glucosamine site is built by Y352 and N363. Residues A366, N372–Y373, S409, and R426 contribute to the acetyl-CoA site. A disordered region spans residues S427–K448.

The protein in the N-terminal section; belongs to the N-acetylglucosamine-1-phosphate uridyltransferase family. It in the C-terminal section; belongs to the transferase hexapeptide repeat family. In terms of assembly, homotrimer. Mg(2+) is required as a cofactor.

It localises to the cytoplasm. It catalyses the reaction alpha-D-glucosamine 1-phosphate + acetyl-CoA = N-acetyl-alpha-D-glucosamine 1-phosphate + CoA + H(+). It carries out the reaction N-acetyl-alpha-D-glucosamine 1-phosphate + UTP + H(+) = UDP-N-acetyl-alpha-D-glucosamine + diphosphate. Its pathway is nucleotide-sugar biosynthesis; UDP-N-acetyl-alpha-D-glucosamine biosynthesis; N-acetyl-alpha-D-glucosamine 1-phosphate from alpha-D-glucosamine 6-phosphate (route II): step 2/2. It participates in nucleotide-sugar biosynthesis; UDP-N-acetyl-alpha-D-glucosamine biosynthesis; UDP-N-acetyl-alpha-D-glucosamine from N-acetyl-alpha-D-glucosamine 1-phosphate: step 1/1. It functions in the pathway bacterial outer membrane biogenesis; LPS lipid A biosynthesis. Functionally, catalyzes the last two sequential reactions in the de novo biosynthetic pathway for UDP-N-acetylglucosamine (UDP-GlcNAc). The C-terminal domain catalyzes the transfer of acetyl group from acetyl coenzyme A to glucosamine-1-phosphate (GlcN-1-P) to produce N-acetylglucosamine-1-phosphate (GlcNAc-1-P), which is converted into UDP-GlcNAc by the transfer of uridine 5-monophosphate (from uridine 5-triphosphate), a reaction catalyzed by the N-terminal domain. The sequence is that of Bifunctional protein GlmU from Bradyrhizobium sp. (strain ORS 278).